A 243-amino-acid polypeptide reads, in one-letter code: 7-cyano-7-deazaguanine synthase (243 aa).

18 to 28 (FSGGQDSATCL) lines the ATP pocket. Residues Cys206, Cys221, Cys224, and Cys227 each contribute to the Zn(2+) site.

It belongs to the QueC family. The cofactor is Zn(2+).

It carries out the reaction 7-carboxy-7-deazaguanine + NH4(+) + ATP = 7-cyano-7-deazaguanine + ADP + phosphate + H2O + H(+). The protein operates within purine metabolism; 7-cyano-7-deazaguanine biosynthesis. In terms of biological role, catalyzes the ATP-dependent conversion of 7-carboxy-7-deazaguanine (CDG) to 7-cyano-7-deazaguanine (preQ(0)). This is 7-cyano-7-deazaguanine synthase from Maricaulis maris (strain MCS10) (Caulobacter maris).